The following is a 175-amino-acid chain: ATP synthase subunit b (175 aa).

Residues 20–40 traverse the membrane as a helical segment; the sequence is LIFWTAVTFVIVLLILKQLAW.

Belongs to the ATPase B chain family. In terms of assembly, F-type ATPases have 2 components, F(1) - the catalytic core - and F(0) - the membrane proton channel. F(1) has five subunits: alpha(3), beta(3), gamma(1), delta(1), epsilon(1). F(0) has four main subunits: a(1), b(2) and c(10-14). The alpha and beta chains form an alternating ring which encloses part of the gamma chain. F(1) is attached to F(0) by a central stalk formed by the gamma and epsilon chains, while a peripheral stalk is formed by the delta and b chains.

The protein localises to the cell inner membrane. Its function is as follows. F(1)F(0) ATP synthase produces ATP from ADP in the presence of a proton or sodium gradient. F-type ATPases consist of two structural domains, F(1) containing the extramembraneous catalytic core and F(0) containing the membrane proton channel, linked together by a central stalk and a peripheral stalk. During catalysis, ATP synthesis in the catalytic domain of F(1) is coupled via a rotary mechanism of the central stalk subunits to proton translocation. In terms of biological role, component of the F(0) channel, it forms part of the peripheral stalk, linking F(1) to F(0). The sequence is that of ATP synthase subunit b from Chlorobium limicola (strain DSM 245 / NBRC 103803 / 6330).